A 513-amino-acid polypeptide reads, in one-letter code: Secreted LysM effector Vd6LysM (513 aa).

The signal sequence occupies residues 1 to 19 (MSFIKSLLLAAAAVASVSA). LysM domains follow at residues 38–85 (SYWV…SYCV), 136–182 (KFHW…NVCV), 219–265 (KFHW…QVCV), and 302–348 (KFHW…QVCV). A compositionally biased stretch (low complexity) spans 357–367 (TTTRPPTTTAP). Residues 357–377 (TTTRPPTTTAPGNGVSTPQPT) form a disordered region. LysM domains are found at residues 387–433 (KFHW…NVCV) and 465–511 (KFHW…NVCV).

Belongs to the secreted LysM effector family.

In terms of biological role, might have a role in sequestration of chitin oligosaccharides (breakdown products of fungal cell walls that are released during invasion and act as triggers of host immunity) to dampen host defense. Does not play an important role during host colonization. The sequence is that of Secreted LysM effector Vd6LysM from Verticillium dahliae (strain VdLs.17 / ATCC MYA-4575 / FGSC 10137) (Verticillium wilt).